The following is a 467-amino-acid chain: Glycosyl hydrolase family 109 protein (467 aa).

The tat-type signal signal peptide spans 1 to 31 (MKNFNRRAFLKAAGATTAGLVTSGLILPASA). Residues 66-67 (QR), Asp88, 137-140 (WQWH), 157-158 (EV), and Asn186 each bind NAD(+). Residues Tyr215, Arg234, 246–249 (YPTH), and Tyr328 contribute to the substrate site. Tyr246 is a binding site for NAD(+).

Belongs to the Gfo/Idh/MocA family. Glycosyl hydrolase 109 subfamily. The cofactor is NAD(+). Post-translationally, predicted to be exported by the Tat system. The position of the signal peptide cleavage has not been experimentally proven.

Its function is as follows. Glycosidase. This Shewanella woodyi (strain ATCC 51908 / MS32) protein is Glycosyl hydrolase family 109 protein.